The primary structure comprises 499 residues: Glycerol kinase (499 aa).

Threonine 13 provides a ligand contact to ADP. ATP is bound by residues threonine 13, threonine 14, and serine 15. Residue threonine 13 participates in sn-glycerol 3-phosphate binding. Arginine 17 serves as a coordination point for ADP. 4 residues coordinate sn-glycerol 3-phosphate: arginine 83, glutamate 84, tyrosine 135, and aspartate 245. Glycerol-binding residues include arginine 83, glutamate 84, tyrosine 135, aspartate 245, and glutamine 246. 2 residues coordinate ADP: threonine 267 and glycine 310. Threonine 267, glycine 310, glutamine 314, and glycine 411 together coordinate ATP. 2 residues coordinate ADP: glycine 411 and asparagine 415.

It belongs to the FGGY kinase family.

The enzyme catalyses glycerol + ATP = sn-glycerol 3-phosphate + ADP + H(+). It functions in the pathway polyol metabolism; glycerol degradation via glycerol kinase pathway; sn-glycerol 3-phosphate from glycerol: step 1/1. With respect to regulation, inhibited by fructose 1,6-bisphosphate (FBP). Its function is as follows. Key enzyme in the regulation of glycerol uptake and metabolism. Catalyzes the phosphorylation of glycerol to yield sn-glycerol 3-phosphate. The protein is Glycerol kinase of Stenotrophomonas maltophilia (strain R551-3).